Consider the following 483-residue polypeptide: Glutamate--tRNA ligase (483 aa).

The 'HIGH' region signature appears at 9 to 19 (PSPTGFLHIGN). The 'KMSKS' region motif lies at 253–257 (KLSKR). Lys-256 is a binding site for ATP.

Belongs to the class-I aminoacyl-tRNA synthetase family. Glutamate--tRNA ligase type 1 subfamily. In terms of assembly, monomer.

Its subcellular location is the cytoplasm. It carries out the reaction tRNA(Glu) + L-glutamate + ATP = L-glutamyl-tRNA(Glu) + AMP + diphosphate. Catalyzes the attachment of glutamate to tRNA(Glu) in a two-step reaction: glutamate is first activated by ATP to form Glu-AMP and then transferred to the acceptor end of tRNA(Glu). In Mycoplasma mycoides subsp. mycoides SC (strain CCUG 32753 / NCTC 10114 / PG1), this protein is Glutamate--tRNA ligase.